An 895-amino-acid polypeptide reads, in one-letter code: Probable methyltransferase PMT27 (895 aa).

Residues 1-16 (MAFGRGRGNKRTSTSS) lie on the Cytoplasmic side of the membrane. A helical; Signal-anchor for type II membrane protein transmembrane segment spans residues 17 to 37 (YASTITMVIFVALCVFGVWML). Topologically, residues 38 to 895 (SSNSVIPPQI…KGFWRPETSQ (858 aa)) are lumenal. Polar residues predominate over residues 43–52 (IPPQITQGST). Residues 43-362 (IPPQITQGST…QRQTSESNTV (320 aa)) form a disordered region. Residues 90-114 (NPGKLPDDAVKSEDEQRKSAKEKSE) are compositionally biased toward basic and acidic residues. The segment covering 115–127 (TTSSKTQTQETQQ) has biased composition (low complexity). The span at 129-143 (NDDKISEEKEKDNGK) shows a compositional bias: basic and acidic residues. Asparagine 145 carries an N-linked (GlcNAc...) asparagine glycan. Basic and acidic residues predominate over residues 154–174 (GQMKKVVKEFEKEQKQQRDED). Positions 176–191 (GTQPKGTQGQEQGQGK) are enriched in low complexity. Polar residues-rich tracts occupy residues 199–232 (GNKQ…GETS) and 243–256 (PEEQ…TGQQ). The span at 257–320 (NEEKTTASEE…RKDEKKHEQG (64 aa)) shows a compositional bias: basic and acidic residues. Positions 337–346 (SQKSWKSQAT) are enriched in polar residues. N-linked (GlcNAc...) asparagine glycans are attached at residues asparagine 375 and asparagine 709.

It belongs to the methyltransferase superfamily.

The protein resides in the endoplasmic reticulum membrane. The sequence is that of Probable methyltransferase PMT27 from Arabidopsis thaliana (Mouse-ear cress).